We begin with the raw amino-acid sequence, 205 residues long: 3-isopropylmalate dehydratase small subunit (205 aa).

It belongs to the LeuD family. LeuD type 1 subfamily. Heterodimer of LeuC and LeuD.

The catalysed reaction is (2R,3S)-3-isopropylmalate = (2S)-2-isopropylmalate. It functions in the pathway amino-acid biosynthesis; L-leucine biosynthesis; L-leucine from 3-methyl-2-oxobutanoate: step 2/4. Catalyzes the isomerization between 2-isopropylmalate and 3-isopropylmalate, via the formation of 2-isopropylmaleate. The chain is 3-isopropylmalate dehydratase small subunit from Christiangramia forsetii (strain DSM 17595 / CGMCC 1.15422 / KT0803) (Gramella forsetii).